Consider the following 243-residue polypeptide: Zinc import ATP-binding protein ZnuC 2 (243 aa).

Positions 3-218 constitute an ABC transporter domain; that stretch reads LSLHQLSVKF…PEYKVLFGLD (216 aa). 35 to 42 is an ATP binding site; it reads GPNGSGKS.

The protein belongs to the ABC transporter superfamily. Zinc importer (TC 3.A.1.15.5) family. In terms of assembly, the complex is composed of two ATP-binding proteins (ZnuC), two transmembrane proteins (ZnuB) and a solute-binding protein (ZnuA).

The protein localises to the cell inner membrane. The enzyme catalyses Zn(2+)(out) + ATP(in) + H2O(in) = Zn(2+)(in) + ADP(in) + phosphate(in) + H(+)(in). In terms of biological role, part of the ABC transporter complex ZnuABC involved in zinc import. Responsible for energy coupling to the transport system. This is Zinc import ATP-binding protein ZnuC 2 from Aliivibrio fischeri (strain ATCC 700601 / ES114) (Vibrio fischeri).